The chain runs to 114 residues: Probable non-functional T cell receptor beta variable 5-7 (114 aa).

The signal sequence occupies residues 1–21 (MGPGLLCWVLLCPLGEGPVDA). The Ig-like domain occupies 22 to 114 (GVTQSPTHLI…SALYLCASSL (93 aa)). An intrachain disulfide couples C42 to C110. Residue N90 is glycosylated (N-linked (GlcNAc...) asparagine).

Alpha-beta TR is a heterodimer composed of an alpha and beta chain; disulfide-linked. The alpha-beta TR is associated with the transmembrane signaling CD3 coreceptor proteins to form the TR-CD3 (TcR or TCR). The assembly of alpha-beta TR heterodimers with CD3 occurs in the endoplasmic reticulum where a single alpha-beta TR heterodimer associates with one CD3D-CD3E heterodimer, one CD3G-CD3E heterodimer and one CD247 homodimer forming a stable octameric structure. CD3D-CD3E and CD3G-CD3E heterodimers preferentially associate with TR alpha and TR beta chains, respectively. The association of the CD247 homodimer is the last step of TcR assembly in the endoplasmic reticulum and is required for transport to the cell surface.

The protein resides in the cell membrane. Functionally, probable non-functional open reading frame (ORF) of V region of the variable domain of T cell receptor (TR) beta chain. Non-functional ORF generally cannot participate in the synthesis of a productive T cell receptor (TR) chain due to altered V-(D)-J or switch recombination and/or splicing site (at mRNA level) and/or conserved amino acid change (protein level). Alpha-beta T cell receptors are antigen specific receptors which are essential to the immune response and are present on the cell surface of T lymphocytes. Recognize peptide-major histocompatibility (MH) (pMH) complexes that are displayed by antigen presenting cells (APC), a prerequisite for efficient T cell adaptive immunity against pathogens. Binding of alpha-beta TR to pMH complex initiates TR-CD3 clustering on the cell surface and intracellular activation of LCK that phosphorylates the ITAM motifs of CD3G, CD3D, CD3E and CD247 enabling the recruitment of ZAP70. In turn ZAP70 phosphorylates LAT, which recruits numerous signaling molecules to form the LAT signalosome. The LAT signalosome propagates signal branching to three major signaling pathways, the calcium, the mitogen-activated protein kinase (MAPK) kinase and the nuclear factor NF-kappa-B (NF-kB) pathways, leading to the mobilization of transcription factors that are critical for gene expression and essential for T cell growth and differentiation. The T cell repertoire is generated in the thymus, by V-(D)-J rearrangement. This repertoire is then shaped by intrathymic selection events to generate a peripheral T cell pool of self-MH restricted, non-autoaggressive T cells. Post-thymic interaction of alpha-beta TR with the pMH complexes shapes TR structural and functional avidity. This is Probable non-functional T cell receptor beta variable 5-7 from Homo sapiens (Human).